A 116-amino-acid chain; its full sequence is Peptidyl-tRNA hydrolase (116 aa).

The protein belongs to the PTH2 family.

It is found in the cytoplasm. It catalyses the reaction an N-acyl-L-alpha-aminoacyl-tRNA + H2O = an N-acyl-L-amino acid + a tRNA + H(+). Its function is as follows. The natural substrate for this enzyme may be peptidyl-tRNAs which drop off the ribosome during protein synthesis. This chain is Peptidyl-tRNA hydrolase, found in Methanococcus maripaludis (strain C7 / ATCC BAA-1331).